The following is a 97-amino-acid chain: Protein transport protein SFT1 (97 aa).

Topologically, residues 1–74 (MSNSRYSQTE…RLTRSLKAGN (74 aa)) are cytoplasmic. Positions 7 to 69 (SQTESNNDRK…KNSSSRLTRS (63 aa)) constitute a t-SNARE coiled-coil homology domain. A helical; Anchor for type IV membrane protein membrane pass occupies residues 75 to 94 (SIWRMVGLALLIFFILYTLF). Topologically, residues 95–97 (KLF) are lumenal.

Component of a SNARE complex consisting of SED5, GOS1, YKT6 and SFT1.

The protein localises to the golgi apparatus membrane. Vesicle SNARE required for retrograde transport within the Golgi complex. This Saccharomyces cerevisiae (strain ATCC 204508 / S288c) (Baker's yeast) protein is Protein transport protein SFT1 (SFT1).